The following is a 433-amino-acid chain: Cell division protein FtsZ homolog 1, chloroplastic (433 aa).

The transit peptide at Met1–Cys66 directs the protein to the chloroplast. N-acetylserine is present on Ser67. GTP is bound by residues Gly83–Asn87, Gly170–Gly172, Glu201, Arg205, and Asp249. Residues Gly399–Phe433 form a disordered region. Low complexity predominate over residues Gln414–Phe433.

Belongs to the FtsZ family. In terms of assembly, aggregates to form a contractile ring-like structure; contraction of the ring was accompanied by an increase in the filament turnover rate. This aggregation is regulated in midchloroplast stroma by MIND1 (repressor) and MINE1 (promoter). Self-interacts and binds to FTSZ2-1 in heteromers to form two morphologically distinct types of filaments, termed type-I (smooth filaments) and type-II (rough filaments), in a GTP-dependent manner. Interacts with ARC3. Part of a complex made of ARC3, ARC6, FTSZ1 and FTSZ2. In terms of tissue distribution, in pollen grain, restricted to plastids of vegetative cells. Also present in pollen tubes plastids.

Its subcellular location is the plastid. It is found in the chloroplast stroma. The protein localises to the chloroplast thylakoid membrane. Functionally, exhibits GTPase activity. Component of the plastid division machinery that forms a contractile ring at the division site. Required for plastid division in a dose-dependent manner. Involved in epidermal plastids division in a MINE1-dependent manner. Involved in blue light-induced chloroplast movements. May regulate thylakoid development. In the vegetative shoot apex, at the shoot apical meristem (SAM), where the proplastid-to-chloroplast transition takes place, contributes equally with FTSZ2-1 in the L2 layer to plastid division. This is Cell division protein FtsZ homolog 1, chloroplastic from Arabidopsis thaliana (Mouse-ear cress).